A 452-amino-acid chain; its full sequence is MSTTFPGLVHDAEIRHDGSNSYRLMQLGCLESVANSTVAYSSSSPLTYSTTGTEFASPYFSTNHQYTPLHHQSFHYEFQHSHPAVTPDAYSLNSLHHSQQYYQQIHHGEPTDFINLHNARALKSSCLDEQRRELGCLDAYRRHDLSLMSHGSQYGMHPDQRLLPGPSLGLAAAGADDLQGSVEAQCGLVLNGQGGVIRRGGTCVVNPTDLFCSVPGRLSLLSSTSKYKVTIAEVKRRLSPPECLNASLLGGILRRAKSKNGGRCLREKLDRLGLNLPAGRRKAANVTLLTSLVEGEALHLARDFGYTCETEFPAKAVGEHLARQHMEQKEQTARKKMILATKQICKEFQDLLSQDRSPLGSSRPTPILDLDIQRHLTHFSLITHGFGTPAICAALSTFQTVLSEMLNYLEKHTTHKNGGAADSGQGHANSEKAPLRKTSEAAVKEGKTEKTD.

A Phosphoserine; by PKA modification is found at Ser239. The interval 280-410 (RRKAANVTLL…VLSEMLNYLE (131 aa)) is H-S-H (helix-span-helix), dimerization. Residues 416–452 (KNGGAADSGQGHANSEKAPLRKTSEAAVKEGKTEKTD) form a disordered region. The segment covering 429–452 (NSEKAPLRKTSEAAVKEGKTEKTD) has biased composition (basic and acidic residues).

This sequence belongs to the AP-2 family. As to quaternary structure, binds DNA as a dimer. Can form homodimers or heterodimers with other AP-2 family members. As to expression, highly expressed in brain, placenta, skeletal muscle, thymus, small intestine, and prostate, and expressed at lower levels in leukocyte, spleen, testis, ovary and colon. Barely detectable in heart, kidney, liver, lung or pancreas.

Its subcellular location is the nucleus. Its function is as follows. Sequence-specific DNA-binding protein that interacts with inducible viral and cellular enhancer elements to regulate transcription of selected genes. AP-2 factors bind to the consensus sequence 5'-GCCNNNGGC-3' and activate genes involved in a large spectrum of important biological functions including proper eye, face, body wall, limb and neural tube development. They also suppress a number of genes including MCAM/MUC18, C/EBP alpha and MYC. The chain is Transcription factor AP-2-delta from Homo sapiens (Human).